The chain runs to 396 residues: Elongation factor Tu 1 (396 aa).

The tr-type G domain maps to 10–206 (KPHVNVGTIG…ALDTYIPTPE (197 aa)). Residues 19–26 (GHVDHGKT) form a G1 region. 19–26 (GHVDHGKT) is a GTP binding site. Residue Thr-26 coordinates Mg(2+). A G2 region spans residues 60–64 (GITIN). The G3 stretch occupies residues 81-84 (DCPG). GTP is bound by residues 81–85 (DCPGH) and 136–139 (NKCD). The segment at 136 to 139 (NKCD) is G4. The G5 stretch occupies residues 174-176 (SAK).

The protein belongs to the TRAFAC class translation factor GTPase superfamily. Classic translation factor GTPase family. EF-Tu/EF-1A subfamily. As to quaternary structure, monomer.

The protein resides in the cytoplasm. It carries out the reaction GTP + H2O = GDP + phosphate + H(+). Functionally, GTP hydrolase that promotes the GTP-dependent binding of aminoacyl-tRNA to the A-site of ribosomes during protein biosynthesis. The polypeptide is Elongation factor Tu 1 (Acidovorax sp. (strain JS42)).